A 276-amino-acid chain; its full sequence is Phosphatidylglycerol--prolipoprotein diacylglyceryl transferase (276 aa).

7 helical membrane passes run 17 to 37 (FGPFAIHYYALAYITALVLGW), 59 to 79 (FLSWATLGVVLGGRLGYILFY), 94 to 114 (VWDGGMSFHGGMLGVAVAILI), 132 to 152 (VPVPIGLFLGRIANFVNGELW), 177 to 197 (PSELIEATLEGLVLFIVLLIA), 208 to 225 (GYLGGMFVMGYGIARTTA), and 235 to 255 (LGYLMFGLTMGQLLSIPMIVI). An a 1,2-diacyl-sn-glycero-3-phospho-(1'-sn-glycerol)-binding site is contributed by R142.

The protein belongs to the Lgt family.

The protein localises to the cell inner membrane. It carries out the reaction L-cysteinyl-[prolipoprotein] + a 1,2-diacyl-sn-glycero-3-phospho-(1'-sn-glycerol) = an S-1,2-diacyl-sn-glyceryl-L-cysteinyl-[prolipoprotein] + sn-glycerol 1-phosphate + H(+). Its pathway is protein modification; lipoprotein biosynthesis (diacylglyceryl transfer). In terms of biological role, catalyzes the transfer of the diacylglyceryl group from phosphatidylglycerol to the sulfhydryl group of the N-terminal cysteine of a prolipoprotein, the first step in the formation of mature lipoproteins. The sequence is that of Phosphatidylglycerol--prolipoprotein diacylglyceryl transferase from Acidiphilium cryptum (strain JF-5).